Consider the following 368-residue polypeptide: MHENFDKRLEVLLEGLALTRRSLDPEGKENELKELEQQAVQDGFWDDVARAGKISERIARLKQQLSEFNELKNKVSTIQFFLEDEESSKDLEMQKELEKEFVFCEKKITEWETLRLLSGELDRNSCFLSINAGAGGTESCDWVEMVLRMYMRWASSHSWRVEVIDRLDGEVAGIKHITLKLVGEYAYGYAKAESGVHRLVRISPFDSNAKRHTSFASVEVFPEIDDKIEVEIHPGDIRIDTYRSSGAGGQHVNVTDSAVRITHFPTGIVVSCQNERSQIQNREACMNMLRARIYQKLLQERLEKQNIDRKNKKEISWGSQIRNYVFQPYTLVKDVRTGYEVGNIQAMMDGELLDAFIKAYLVDYGEIT.

Glutamine 250 carries the post-translational modification N5-methylglutamine.

This sequence belongs to the prokaryotic/mitochondrial release factor family. Methylated by PrmC. Methylation increases the termination efficiency of RF2.

The protein resides in the cytoplasm. In terms of biological role, peptide chain release factor 2 directs the termination of translation in response to the peptide chain termination codons UGA and UAA. The sequence is that of Peptide chain release factor 2 from Chlamydia trachomatis serovar L2 (strain ATCC VR-902B / DSM 19102 / 434/Bu).